Here is a 785-residue protein sequence, read N- to C-terminus: Semaphorin-3F (785 aa).

A signal peptide spans 1-18 (MLVAGLLLWASLLTGAWP). Positions 31–545 (RVRLSFKELK…SAVGVTHLSL (515 aa)) constitute a Sema domain. A glycan (N-linked (GlcNAc...) asparagine) is linked at Asn53. Cys104 and Cys115 are disulfide-bonded. N-linked (GlcNAc...) asparagine glycosylation occurs at Asn126. 5 disulfides stabilise this stretch: Cys133/Cys142, Cys300/Cys412, Cys324/Cys372, Cys548/Cys566, and Cys678/Cys746. In terms of domain architecture, Ig-like C2-type spans 605–690 (ANKNAVESVQ…TENNFKHVVT (86 aa)). Residues 752–785 (HVPPSPREAPGAPRSPEPQDQKKPRNRRHHPPDT) are disordered. The span at 775-785 (PRNRRHHPPDT) shows a compositional bias: basic residues.

Belongs to the semaphorin family. As to expression, expressed abundantly but differentially in a variety of neural and nonneural tissues. There is high expression in mammary gland, kidney, fetal brain, and lung and lower expression in heart and liver.

The protein localises to the secreted. In terms of biological role, may play a role in cell motility and cell adhesion. In Homo sapiens (Human), this protein is Semaphorin-3F (SEMA3F).